Here is a 323-residue protein sequence, read N- to C-terminus: Aspartate carbamoyltransferase catalytic subunit (323 aa).

Carbamoyl phosphate-binding residues include arginine 71 and threonine 72. Residue lysine 99 participates in L-aspartate binding. Residues arginine 121, histidine 151, and glutamine 154 each coordinate carbamoyl phosphate. Residues arginine 184 and arginine 239 each contribute to the L-aspartate site. Carbamoyl phosphate-binding residues include glycine 280 and proline 281.

This sequence belongs to the aspartate/ornithine carbamoyltransferase superfamily. ATCase family. In terms of assembly, heterododecamer (2C3:3R2) of six catalytic PyrB chains organized as two trimers (C3), and six regulatory PyrI chains organized as three dimers (R2).

It carries out the reaction carbamoyl phosphate + L-aspartate = N-carbamoyl-L-aspartate + phosphate + H(+). The protein operates within pyrimidine metabolism; UMP biosynthesis via de novo pathway; (S)-dihydroorotate from bicarbonate: step 2/3. Its function is as follows. Catalyzes the condensation of carbamoyl phosphate and aspartate to form carbamoyl aspartate and inorganic phosphate, the committed step in the de novo pyrimidine nucleotide biosynthesis pathway. The protein is Aspartate carbamoyltransferase catalytic subunit of Cupriavidus taiwanensis (strain DSM 17343 / BCRC 17206 / CCUG 44338 / CIP 107171 / LMG 19424 / R1) (Ralstonia taiwanensis (strain LMG 19424)).